Consider the following 305-residue polypeptide: Phosphoribosylaminoimidazole-succinocarboxamide synthase (305 aa).

Belongs to the SAICAR synthetase family.

It catalyses the reaction 5-amino-1-(5-phospho-D-ribosyl)imidazole-4-carboxylate + L-aspartate + ATP = (2S)-2-[5-amino-1-(5-phospho-beta-D-ribosyl)imidazole-4-carboxamido]succinate + ADP + phosphate + 2 H(+). It functions in the pathway purine metabolism; IMP biosynthesis via de novo pathway; 5-amino-1-(5-phospho-D-ribosyl)imidazole-4-carboxamide from 5-amino-1-(5-phospho-D-ribosyl)imidazole-4-carboxylate: step 1/2. The protein is Phosphoribosylaminoimidazole-succinocarboxamide synthase of Albidiferax ferrireducens (strain ATCC BAA-621 / DSM 15236 / T118) (Rhodoferax ferrireducens).